The primary structure comprises 504 residues: E3 ubiquitin-protein ligase dbl4 (504 aa).

Positions 127–338 are TRIAD supradomain; sequence HEGTCEICYD…NNWYTCNRYE (212 aa). Residues C131, C134, C147, H149, C152, C155, C173, C178, C217, C222, C244, C246, C251, C254, H259, C264, C291, and C294 each contribute to the Zn(2+) site. The segment at 131–178 adopts an RING-type 1 zinc-finger fold; sequence CEICYDEGCLPFFSAECDHEFCLACYRQYLDSRISEGESVIQCPEESC. The IBR-type zinc-finger motif lies at 197 to 264; the sequence is DRYHRLLDRS…GHDNHQPTIC (68 aa). The RING-type 2; atypical zinc finger occupies 291-320; sequence CPKCSTTIEKNGGCNHMTCKKCKYEFCWVC. C304 is a catalytic residue. The Zn(2+) site is built by C309, C312, C317, C320, H327, and C334.

It belongs to the RBR family.

The protein resides in the cytoplasm. It localises to the nucleus. The catalysed reaction is [E2 ubiquitin-conjugating enzyme]-S-ubiquitinyl-L-cysteine + [acceptor protein]-L-lysine = [E2 ubiquitin-conjugating enzyme]-L-cysteine + [acceptor protein]-N(6)-ubiquitinyl-L-lysine.. It functions in the pathway protein modification; protein ubiquitination. In terms of biological role, probable ubiquitin-protein ligase involved in the degradation-related ubiquitination of histones. Contributes to the post-translational regulation of histone protein levels by polyubiquitination of excess histones for subsequent degradation. The sequence is that of E3 ubiquitin-protein ligase dbl4 from Schizosaccharomyces pombe (strain 972 / ATCC 24843) (Fission yeast).